Consider the following 59-residue polypeptide: UPF0434 protein GOX0764 (59 aa).

This sequence belongs to the UPF0434 family.

The chain is UPF0434 protein GOX0764 from Gluconobacter oxydans (strain 621H) (Gluconobacter suboxydans).